Here is a 152-residue protein sequence, read N- to C-terminus: Small ribosomal subunit protein uS15 (152 aa).

It belongs to the universal ribosomal protein uS15 family. In terms of assembly, part of the 30S ribosomal subunit.

The polypeptide is Small ribosomal subunit protein uS15 (Saccharolobus solfataricus (strain ATCC 35092 / DSM 1617 / JCM 11322 / P2) (Sulfolobus solfataricus)).